Reading from the N-terminus, the 65-residue chain is Large ribosomal subunit protein uL29 (65 aa).

This sequence belongs to the universal ribosomal protein uL29 family.

This chain is Large ribosomal subunit protein uL29, found in Psychrobacter arcticus (strain DSM 17307 / VKM B-2377 / 273-4).